The primary structure comprises 427 residues: Adenylosuccinate synthetase (427 aa).

GTP is bound by residues 11-17 and 39-41; these read GDEGKGK and GHT. The Proton acceptor role is filled by Asp12. The Mg(2+) site is built by Asp12 and Gly39. Residues 12-15, 37-40, Thr132, Arg146, Gln223, Thr238, and Arg302 each bind IMP; these read DEGK and NAGH. His40 acts as the Proton donor in catalysis. Substrate is bound at residue 298–304; the sequence is TTTGRPR. GTP contacts are provided by residues Arg304, 330–332, and 412–414; these read KLD and GVG.

It belongs to the adenylosuccinate synthetase family. Homodimer. Mg(2+) serves as cofactor.

It is found in the cytoplasm. The catalysed reaction is IMP + L-aspartate + GTP = N(6)-(1,2-dicarboxyethyl)-AMP + GDP + phosphate + 2 H(+). It participates in purine metabolism; AMP biosynthesis via de novo pathway; AMP from IMP: step 1/2. Plays an important role in the de novo pathway and in the salvage pathway of purine nucleotide biosynthesis. Catalyzes the first committed step in the biosynthesis of AMP from IMP. The sequence is that of Adenylosuccinate synthetase (purA) from Dictyostelium discoideum (Social amoeba).